The following is a 512-amino-acid chain: Cytochrome P450 4d1 (512 aa).

Glu-316 and Cys-456 together coordinate heme.

The protein belongs to the cytochrome P450 family. Requires heme as cofactor.

Its subcellular location is the endoplasmic reticulum membrane. It is found in the microsome membrane. Its function is as follows. Involved in the metabolism of insect hormones and in the breakdown of synthetic insecticides. The chain is Cytochrome P450 4d1 (Cyp4d1) from Drosophila simulans (Fruit fly).